Here is a 199-residue protein sequence, read N- to C-terminus: Elongation factor Ts (199 aa).

The segment at 81–84 (TDFV) is involved in Mg(2+) ion dislocation from EF-Tu.

Belongs to the EF-Ts family.

Its subcellular location is the cytoplasm. Associates with the EF-Tu.GDP complex and induces the exchange of GDP to GTP. It remains bound to the aminoacyl-tRNA.EF-Tu.GTP complex up to the GTP hydrolysis stage on the ribosome. The polypeptide is Elongation factor Ts (Thermotoga sp. (strain RQ2)).